The sequence spans 381 residues: Ubiquitin-associated protein 1-like (381 aa).

The UMA domain maps to 4–50; that stretch reads LDGVPFKLPKGFVIGTEPLPGPELSVPACGEVLLGSMHDFSLERTAL. Disordered regions lie at residues 87-141 and 185-228; these read LAPA…PGRR and SLCP…LRSH. The span at 95-104 shows a compositional bias: basic and acidic residues; it reads RDPEAGHQER. The span at 105-123 shows a compositional bias: acidic residues; sequence PEEEGEDEAEASSGSEEEP. Positions 124-141 are enriched in low complexity; that stretch reads APSSLQPGSPASPGPGRR. Residues 197–216 are compositionally biased toward pro residues; that stretch reads ASPPGPAPQHPAAPASPPRP.

In Homo sapiens (Human), this protein is Ubiquitin-associated protein 1-like (UBAP1L).